A 231-amino-acid polypeptide reads, in one-letter code: D-allulose-6-phosphate 3-epimerase (231 aa).

A substrate-binding site is contributed by Ser6. Residues His30, Asp32, and His63 each coordinate a divalent metal cation. Asp32 functions as the Proton acceptor in the catalytic mechanism. Substrate-binding positions include His63, 140–143 (GFAG), 173–175 (DGS), and 195–197 (GTS). Asp173 lines the a divalent metal cation pocket. The Proton donor role is filled by Asp173.

It belongs to the ribulose-phosphate 3-epimerase family. AlsE subfamily. In terms of assembly, homohexamer. Trimer of dimers. The cofactor is Co(2+). Mn(2+) serves as cofactor. It depends on Zn(2+) as a cofactor.

It catalyses the reaction D-allulose 6-phosphate = keto-D-fructose 6-phosphate. The protein operates within carbohydrate degradation; D-allose degradation. In terms of biological role, catalyzes the reversible epimerization of D-allulose 6-phosphate to D-fructose 6-phosphate. Can also catalyze with lower efficiency the reversible epimerization of D-ribulose 5-phosphate to D-xylulose 5-phosphate. The protein is D-allulose-6-phosphate 3-epimerase of Escherichia coli (strain K12).